We begin with the raw amino-acid sequence, 2871 residues long: Fibrillin-1 (2871 aa).

The signal sequence occupies residues 1-24; it reads MRRGRLLEIALGFTVLLASYTSHG. Residues 25–44 constitute a propeptide that is removed on maturation; it reads ADANLEAGNVKETRASRAKR. The segment at 45 to 81 is fibrillin unique N-terminal (FUN) domain; the sequence is RGGGGHDALKGPNVCGSRYNAYCCPGWKTLPGGNQCI. Residues 45 to 450 form an N-terminal domain region; that stretch reads RGGGGHDALK…PPRVLPVNVT (406 aa). 11 disulfide bridges follow: Cys-59-Cys-68, Cys-67-Cys-80, Cys-85-Cys-94, Cys-89-Cys-100, Cys-102-Cys-111, Cys-119-Cys-129, Cys-123-Cys-134, Cys-136-Cys-145, Cys-150-Cys-160, Cys-154-Cys-166, and Cys-168-Cys-177. EGF-like domains follow at residues 81 to 112, 115 to 146, and 147 to 178; these read IVPICRHSCGDGFCSRPNMCTCPSGQIAPSCG, SIQHCNIRCMNGGSCSDDHCLCQKGYIGTHCG, and QPVCESGCLNGGRCVAPNRCACTYGFTGPQCE. The interaction with MFAP4 stretch occupies residues 119 to 329; it reads CNIRCMNGGS…YTSPDGTRCI (211 aa). The TB 1 domain occupies 184-236; the sequence is GPCFTVISNQMCQGQLSGIVCTKTLCCATVGRAWGHPCEMCPAQPHPCRRGFI. Positions 195-221 are hybrid domain 1; that stretch reads CQGQLSGIVCTKTLCCATVGRAWGHPC. Positions 246–287 constitute an EGF-like 4; calcium-binding domain; the sequence is DVDECQAIPGLCQGGNCINTVGSFECKCPAGHKLNEVSQKCE. 6 cysteine pairs are disulfide-bonded: Cys-250–Cys-262, Cys-257–Cys-271, Cys-273–Cys-286, Cys-292–Cys-304, Cys-299–Cys-313, and Cys-315–Cys-328. Ser-268 is a glycosylation site (O-linked (Glc) serine). The region spanning 288 to 329 is the EGF-like 5; calcium-binding domain; that stretch reads DIDECSTIPGICEGGECTNTVSSYFCKCPPGFYTSPDGTRCI. Positions 334-389 constitute a TB 2 domain; that stretch reads GYCYTALTNGRCSNQLPQSITKMQCCCDAGRCWSPGVTVAPEMCPIRATEDFNKLC. N-linked (GlcNAc...) asparagine glycosylation occurs at Asn-448. The EGF-like 6 domain occupies 449–489; sequence VTDYCQLVRYLCQNGRCIPTPGSYRCECNKGFQLDLRGECI. Disulfide bonds link Cys-453–Cys-465, Cys-460–Cys-474, Cys-476–Cys-488, Cys-494–Cys-504, Cys-499–Cys-513, Cys-515–Cys-528, Cys-534–Cys-546, Cys-541–Cys-555, Cys-557–Cys-570, Cys-576–Cys-587, Cys-582–Cys-596, Cys-598–Cys-611, Cys-617–Cys-628, Cys-623–Cys-637, and Cys-639–Cys-652. The O-linked (Glc) serine glycan is linked to Ser-471. An EGF-like 7; calcium-binding domain is found at 490–529; sequence DVDECEKNPCAGGECINNQGSYTCQCRAGYQSTLTRTECR. O-linked (Glc) serine glycosylation is present at Ser-510. Residues 530–571 form the EGF-like 8; calcium-binding domain; that stretch reads DIDECLQNGRICNNGRCINTDGSFHCVCNAGFHVTRDGKNCE. The O-linked (Glc) serine glycan is linked to Ser-552. The EGF-like 9; calcium-binding domain maps to 572-612; sequence DMDECSIRNMCLNGMCINEDGSFKCICKPGFQLASDGRYCK. O-linked (Glc) serine glycosylation occurs at Ser-593. An EGF-like 10; calcium-binding domain is found at 613-653; that stretch reads DINECETPGICMNGRCVNTDGSYRCECFPGLAVGLDGRVCV. The O-linked (Glc) serine glycan is linked to Ser-634. One can recognise a TB 3 domain in the interval 659–711; the sequence is STCYGGYKRGQCIKPLFGAVTKSECCCASTEYAFGEPCQPCPAQNSAEYQALC. An EGF-like 11; calcium-binding domain is found at 723-764; sequence DINECALDPDICPNGICENLRGTYKCICNSGYEVDSTGKNCV. 16 disulfide bridges follow: Cys-727-Cys-739, Cys-734-Cys-748, Cys-750-Cys-763, Cys-769-Cys-781, Cys-776-Cys-790, Cys-792-Cys-805, Cys-811-Cys-821, Cys-816-Cys-830, Cys-832-Cys-845, Cys-853-Cys-875, Cys-862-Cys-887, Cys-876-Cys-890, Cys-896-Cys-908, Cys-914-Cys-926, Cys-921-Cys-935, and Cys-937-Cys-950. The 42-residue stretch at 765 to 806 folds into the EGF-like 12; calcium-binding domain; the sequence is DINECVLNSLLCDNGQCRNTPGSFVCTCPKGFIYKPDLKTCE. A glycan (O-linked (Glc) serine) is linked at Ser-787. The 40-residue stretch at 807-846 folds into the EGF-like 13; calcium-binding domain; it reads DIDECESSPCINGVCKNSPGSFICECSSESTLDPTKTICI. O-linked (Glc) serine glycosylation is present at Ser-827. Residues 851–902 form the TB 4 domain; it reads GTCWQTVIDGRCEININGATLKSQCCSSLGAAWGSPCTLCQVDPICGKGYSR. The tract at residues 862–887 is hybrid domain 2; that stretch reads CEININGATLKSQCCSSLGAAWGSPC. Residues 910–951 form the EGF-like 14; calcium-binding domain; sequence DIDECEVFPGVCKNGLCVNTRGSFKCQCPSGMTLDATGRICL. The region spanning 956-1008 is the TB 5 domain; sequence ETCFLRYEDEECTLPIAGRHRMDACCCSVGAAWGTEECEECPMRNTPEYEELC. The EGF-like 15; calcium-binding domain occupies 1028-1069; sequence DINECKMIPSLCTHGKCRNTIGSFKCRCDSGFALDSEERNCT. Cystine bridges form between Cys-1032–Cys-1044, Cys-1039–Cys-1053, Cys-1055–Cys-1068, Cys-1074–Cys-1086, Cys-1081–Cys-1095, Cys-1097–Cys-1111, Cys-1117–Cys-1129, Cys-1124–Cys-1138, Cys-1140–Cys-1153, Cys-1159–Cys-1171, Cys-1166–Cys-1180, Cys-1182–Cys-1195, Cys-1201–Cys-1212, Cys-1208–Cys-1221, Cys-1223–Cys-1236, Cys-1242–Cys-1254, Cys-1249–Cys-1263, Cys-1265–Cys-1278, Cys-1284–Cys-1296, Cys-1291–Cys-1305, Cys-1307–Cys-1320, Cys-1326–Cys-1339, Cys-1333–Cys-1348, Cys-1350–Cys-1361, Cys-1367–Cys-1380, Cys-1374–Cys-1389, Cys-1391–Cys-1402, Cys-1408–Cys-1420, Cys-1415–Cys-1429, Cys-1431–Cys-1444, Cys-1450–Cys-1461, Cys-1456–Cys-1470, Cys-1472–Cys-1485, Cys-1491–Cys-1502, Cys-1497–Cys-1511, Cys-1513–Cys-1526, Cys-1534–Cys-1562, Cys-1549–Cys-1574, Cys-1563–Cys-1577, Cys-1564–Cys-1589, Cys-1610–Cys-1622, Cys-1617–Cys-1631, Cys-1633–Cys-1646, Cys-1652–Cys-1663, Cys-1658–Cys-1672, and Cys-1674–Cys-1687. O-linked (Glc) serine glycosylation occurs at Ser-1050. A glycan (N-linked (GlcNAc...) asparagine) is linked at Asn-1067. The 43-residue stretch at 1070-1112 folds into the EGF-like 16; calcium-binding domain; sequence DIDECRISPDLCGRGQCVNTPGDFECKCDEGYESGFMMMKNCM. The region spanning 1113–1154 is the EGF-like 17; calcium-binding domain; the sequence is DIDECQRDPLLCRGGVCHNTEGSYRCECPPGHQLSPNISACI. The O-linked (Glc) serine glycan is linked to Ser-1135. The N-linked (GlcNAc...) asparagine glycan is linked to Asn-1149. Residues 1155–1196 enclose the EGF-like 18; calcium-binding domain; it reads DINECELSAHLCPNGRCVNLIGKYQCACNPGYHSTPDRLFCV. Residues 1197 to 1237 form the EGF-like 19; calcium-binding domain; that stretch reads DIDECSIMNGGCETFCTNSEGSYECSCQPGFALMPDQRSCT. A glycan (O-linked (Glc) serine) is linked at Ser-1218. The region spanning 1238 to 1279 is the EGF-like 20; calcium-binding domain; sequence DIDECEDNPNICDGGQCTNIPGEYRCLCYDGFMASEDMKTCV. The region spanning 1280–1321 is the EGF-like 21; calcium-binding domain; that stretch reads DVNECDLNPNICLSGTCENTKGSFICHCDMGYSGKKGKTGCT. The O-linked (Glc) serine glycan is linked to Ser-1302. The region spanning 1322–1362 is the EGF-like 22; calcium-binding domain; the sequence is DINECEIGAHNCGKHAVCTNTAGSFKCSCSPGWIGDGIKCT. The O-linked (Glc) serine glycan is linked to Ser-1345. Residues 1363-1403 enclose the EGF-like 23; calcium-binding domain; sequence DLDECSNGTHMCSQHADCKNTMGSYRCLCKEGYTGDGFTCT. The N-linked (GlcNAc...) asparagine glycan is linked to Asn-1369. Ser-1386 carries O-linked (Glc) serine glycosylation. In terms of domain architecture, EGF-like 24; calcium-binding spans 1404–1445; it reads DLDECSENLNLCGNGQCLNAPGGYRCECDMGFVPSADGKACE. Residues 1446-1486 enclose the EGF-like 25; calcium-binding domain; sequence DIDECSLPNICVFGTCHNLPGLFRCECEIGYELDRSGGNCT. The N-linked (GlcNAc...) asparagine glycan is linked to Asn-1484. The 41-residue stretch at 1487 to 1527 folds into the EGF-like 26; calcium-binding domain; sequence DVNECLDPTTCISGNCVNTPGSYICDCPPDFELNPTRVGCV. O-linked (Glc) serine glycosylation occurs at Ser-1508. The segment at 1528–2731 is C-terminal domain; that stretch reads DTRSGNCYLD…GYPKRGRKRR (1204 aa). Residues 1532–1589 enclose the TB 6 domain; sequence GNCYLDIRPRGDNGDTACSNEIGVGVSKASCCCSLGKAWGTPCEMCPAVNTSEYKILC. The short motif at 1541 to 1543 is the Cell attachment site element; it reads RGD. N-linked (GlcNAc...) asparagine glycosylation is present at Asn-1581. In terms of domain architecture, EGF-like 27; calcium-binding spans 1606–1647; the sequence is DIDECQELPGLCQGGKCINTFGSFQCRCPTGYYLNEDTRVCD. The O-linked (Glc) serine glycan is linked to Ser-1628. Residues 1648–1688 enclose the EGF-like 28; calcium-binding domain; it reads DVNECETPGICGPGTCYNTVGNYTCICPPDYMQVNGGNNCM. A glycan (N-linked (GlcNAc...) asparagine) is linked at Asn-1669. The TB 7 domain maps to 1693–1748; the sequence is SLCYRNYYADNQTCDGELLFNMTKKMCCCSYNIGRAWNKPCEQCPIPSTDEFATLC. Residues Asn-1703 and Asn-1713 are each glycosylated (N-linked (GlcNAc...) asparagine). In terms of domain architecture, EGF-like 29; calcium-binding spans 1766–1807; that stretch reads DIDECREIPGVCENGVCINMVGSFRCECPVGFFYNDKLLVCE. 40 disulfide bridges follow: Cys-1770–Cys-1782, Cys-1777–Cys-1791, Cys-1793–Cys-1806, Cys-1812–Cys-1824, Cys-1818–Cys-1833, Cys-1835–Cys-1847, Cys-1853–Cys-1865, Cys-1860–Cys-1874, Cys-1876–Cys-1889, Cys-1895–Cys-1905, Cys-1900–Cys-1914, Cys-1916–Cys-1928, Cys-1934–Cys-1947, Cys-1942–Cys-1956, Cys-1958–Cys-1971, Cys-1977–Cys-1989, Cys-1984–Cys-1998, Cys-2000–Cys-2011, Cys-2017–Cys-2029, Cys-2024–Cys-2038, Cys-2040–Cys-2053, Cys-2061–Cys-2083, Cys-2070–Cys-2096, Cys-2084–Cys-2099, Cys-2085–Cys-2111, Cys-2131–Cys-2142, Cys-2137–Cys-2151, Cys-2153–Cys-2164, Cys-2170–Cys-2181, Cys-2176–Cys-2190, Cys-2192–Cys-2204, Cys-2210–Cys-2221, Cys-2217–Cys-2230, Cys-2232–Cys-2245, Cys-2251–Cys-2265, Cys-2258–Cys-2274, Cys-2276–Cys-2289, Cys-2295–Cys-2307, Cys-2302–Cys-2316, and Cys-2318–Cys-2331. Residues 1808–1848 enclose the EGF-like 30; calcium-binding domain; that stretch reads DIDECQNGPVCQRNAECINTAGSYRCDCKPGYRFTSTGQCN. Ser-1830 carries O-linked (Glc) serine glycosylation. Residues 1849–1890 form the EGF-like 31; calcium-binding domain; that stretch reads DRNECQEIPNICSHGQCIDTVGSFYCLCHTGFKTNDDQTMCL. Ser-1871 carries O-linked (Glc) serine glycosylation. Residues 1891–1929 enclose the EGF-like 32; calcium-binding domain; the sequence is DINECERDACGNGTCRNTIGSFNCRCNHGFILSHNNDCI. N-linked (GlcNAc...) asparagine glycosylation occurs at Asn-1902. Residue Ser-1911 is glycosylated (O-linked (Glc) serine). The EGF-like 33; calcium-binding domain occupies 1930-1972; that stretch reads DVDECASGNGNLCRNGQCINTVGSFQCQCNEGYEVAPDGRTCV. Ser-1953 carries O-linked (Glc) serine glycosylation. An EGF-like 34; calcium-binding domain is found at 1973–2012; that stretch reads DINECLLEPRKCAPGTCQNLDGSYRCICPPGYSLQNEKCE. The EGF-like 35; calcium-binding domain maps to 2013–2054; that stretch reads DIDECVEEPEICALGTCSNTEGSFKCLCPEGFSLSSSGRRCQ. Ser-2035 carries an O-linked (Glc) serine glycan. Residues 2059 to 2111 form the TB 8 domain; that stretch reads SYCYAKFEGGKCSSPKSRNHSKQECCCALKGEGWGDPCELCPTEPDEAFRQIC. A glycan (N-linked (GlcNAc...) asparagine) is linked at Asn-2077. An EGF-like 36; calcium-binding domain is found at 2127-2165; it reads DMDECKEPDVCKHGQCINTDGSYRCECPFGYILAGNECV. The O-linked (Glc) serine glycan is linked to Ser-2148. Residues 2166-2205 form the EGF-like 37; calcium-binding domain; that stretch reads DTDECSVGNPCGNGTCKNVIGGFECTCEEGFEPGPMMTCE. Residue Asn-2178 is glycosylated (N-linked (GlcNAc...) asparagine). The 41-residue stretch at 2206–2246 folds into the EGF-like 38; calcium-binding domain; it reads DINECAQNPLLCAFRCVNTYGSYECKCPVGYVLREDRRMCK. Ser-2227 is a glycosylation site (O-linked (Glc) serine). Residues 2247–2290 enclose the EGF-like 39; calcium-binding domain; it reads DEDECEEGKHDCTEKQMECKNLIGTYMCICGPGYQRRPDGEGCV. An EGF-like 40; calcium-binding domain is found at 2291-2332; sequence DENECQTKPGICENGRCLNTRGSYTCECNDGFTASPNQDECL. O-linked (Glc) serine glycosylation occurs at Ser-2313. The 54-residue stretch at 2337 to 2390 folds into the TB 9 domain; that stretch reads GYCFTEVLQNMCQIGSSNRNPVTKSECCCDGGRGWGPHCEICPFQGTVAFKKLC. Positions 2402–2443 constitute an EGF-like 41; calcium-binding domain; that stretch reads DIDECKVIHDVCRNGECVNDRGSYHCICKTGYTPDITGTSCV. Cystine bridges form between Cys-2406–Cys-2418, Cys-2413–Cys-2427, Cys-2429–Cys-2442, Cys-2448–Cys-2459, Cys-2455–Cys-2468, Cys-2470–Cys-2483, Cys-2489–Cys-2500, Cys-2496–Cys-2509, Cys-2511–Cys-2522, Cys-2528–Cys-2541, Cys-2535–Cys-2550, Cys-2552–Cys-2565, Cys-2571–Cys-2581, Cys-2577–Cys-2590, Cys-2592–Cys-2605, Cys-2611–Cys-2622, Cys-2617–Cys-2631, Cys-2633–Cys-2646, Cys-2652–Cys-2663, Cys-2659–Cys-2672, and Cys-2674–Cys-2686. The EGF-like 42; calcium-binding domain maps to 2444–2484; the sequence is DLNECNQAPKPCNFICKNTEGSYQCSCPKGYILQEDGRSCK. Ser-2465 carries an O-linked (Glc) serine glycan. Positions 2485–2523 constitute an EGF-like 43; calcium-binding domain; the sequence is DLDECATKQHNCQFLCVNTIGGFTCKCPPGFTQHHTSCI. One can recognise an EGF-like 44; calcium-binding domain in the interval 2524-2566; it reads DNNECTSDINLCGSKGICQNTPGSFTCECQRGFSLDQTGSSCE. O-linked (Glc) serine glycosylation is present at Ser-2547. Residues 2567–2606 enclose the EGF-like 45; calcium-binding domain; sequence DVDECEGNHRCQHGCQNIIGGYRCSCPQGYLQHYQWNQCV. Positions 2607-2647 constitute an EGF-like 46; calcium-binding domain; it reads DENECLSAHICGGASCHNTLGSYKCMCPAGFQYEQFSGGCQ. O-linked (Glc) serine glycosylation is present at Ser-2628. In terms of domain architecture, EGF-like 47; calcium-binding spans 2648-2687; it reads DINECGSAQAPCSYGCSNTEGGYLCGCPPGYFRIGQGHCV. At Ser-2702 the chain carries Phosphoserine; by FAM20C. Ser-2709 bears the Phosphoserine mark. Residues 2726–2746 are disordered; it reads RGRKRRSTNETDASNIEDQSE. Asn-2734 carries an N-linked (GlcNAc...) asparagine glycan. The span at 2735–2746 shows a compositional bias: polar residues; it reads ETDASNIEDQSE. Asn-2750 and Asn-2767 each carry an N-linked (GlcNAc...) asparagine glycan.

The protein belongs to the fibrillin family. In terms of assembly, interacts with COL16A1. Interacts with integrin alpha-V/beta-3. Interacts with ADAMTS10; this interaction promotes microfibril assembly. Interacts with THSD4; this interaction promotes fibril formation. Interacts (via N-terminal domain) with FBLN2 and FBLN5. Interacts with ELN. Forms a ternary complex with ELN and FBLN2 or FBLN5 and a significant interaction with ELN seen only in the presence of FBLN2 or FBLN5. Interacts (via N-terminal domain) with LTBP2 (via C-terminal domain) in a Ca(+2)-dependent manner. Interacts (via N-terminal domain) with LTBP1 (via C-terminal domain). Interacts with integrins ITGA5:ITGB1, ITGAV:ITGB3 and ITGAV:ITGB6. Interacts (via N-terminal domain) with BMP2, BMP4, BMP7, BMP10 and GDF5. Interacts (via N-terminal domain) with MFAP2 and MFAP5. Interacts with ADAMTSL5. Interacts with MFAP4. Interacts (via N-terminal domain) with TNFSF11 in a Ca(+2)-dependent manner. Interacts (via N-terminal domain) with EFEMP2; this interaction inhibits EFEMP2 binding to LOX and ELN. Cleavage of N- and C-terminus by furin is required for incorporation into the extracellular matrix and assembly into microfibrils. The C-terminus, which corresponds to the Asprosin chain, was initially thought to constitute a propeptide. Fibrillin-1 and Asprosin chains are still linked together during the secretion from cells, but are subsequently separated by furin, an essential step for incorporation of Fibrillin-1 into the nascent microfibrils. In terms of processing, forms intermolecular disulfide bonds either with other fibrillin-1 molecules or with other components of the microfibrils. Post-translationally, O-glycosylated on serine residues by POGLUT2 and POGLUT3 which is necessary for efficient protein secretion.

It is found in the secreted. The protein resides in the extracellular space. The protein localises to the extracellular matrix. Its function is as follows. Structural component of the 10-12 nm diameter microfibrils of the extracellular matrix, which conveys both structural and regulatory properties to load-bearing connective tissues. Fibrillin-1-containing microfibrils provide long-term force bearing structural support. In tissues such as the lung, blood vessels and skin, microfibrils form the periphery of the elastic fiber, acting as a scaffold for the deposition of elastin. In addition, microfibrils can occur as elastin-independent networks in tissues such as the ciliary zonule, tendon, cornea and glomerulus where they provide tensile strength and have anchoring roles. Fibrillin-1 also plays a key role in tissue homeostasis through specific interactions with growth factors, such as the bone morphogenetic proteins (BMPs), growth and differentiation factors (GDFs) and latent transforming growth factor-beta-binding proteins (LTBPs), cell-surface integrins and other extracellular matrix protein and proteoglycan components. Regulates osteoblast maturation by controlling TGF-beta bioavailability and calibrating TGF-beta and BMP levels, respectively. Negatively regulates osteoclastogenesis by binding and sequestering an osteoclast differentiation and activation factor TNFSF11. This leads to disruption of TNFSF11-induced Ca(2+) signaling and impairment of TNFSF11-mediated nuclear translocation and activation of transcription factor NFATC1 which regulates genes important for osteoclast differentiation and function. Mediates cell adhesion via its binding to cell surface receptors integrins ITGAV:ITGB3 and ITGA5:ITGB1. Binds heparin and this interaction has an important role in the assembly of microfibrils. Adipokine secreted by white adipose tissue that plays an important regulatory role in the glucose metabolism of liver, muscle and pancreas. Hormone that targets the liver in response to fasting to increase plasma glucose levels. Binds the olfactory receptor OR4M1 at the surface of hepatocytes and promotes hepatocyte glucose release by activating the protein kinase A activity in the liver, resulting in rapid glucose release into the circulation. May act as a regulator of adaptive thermogenesis by inhibiting browning and energy consumption, while increasing lipid deposition in white adipose tissue. Also acts as an orexigenic hormone that increases appetite: crosses the blood brain barrier and exerts effects on the hypothalamus. In the arcuate nucleus of the hypothalamus, asprosin directly activates orexigenic AgRP neurons and indirectly inhibits anorexigenic POMC neurons, resulting in appetite stimulation. Activates orexigenic AgRP neurons via binding to the olfactory receptor OR4M1. May also play a role in sperm motility in testis via interaction with OR4M1 receptor. The polypeptide is Fibrillin-1 (Homo sapiens (Human)).